Here is a 590-residue protein sequence, read N- to C-terminus: O-fucosyltransferase 2 (590 aa).

Residues 1–16 (MGQERPNDEERPESRD) show a composition bias toward basic and acidic residues. Residues 1–26 (MGQERPNDEERPESRDLGVYGCSPPH) form a disordered region. Residues 67–87 (TAIGVMAILGFFCLVNWFMLS) form a helical; Signal-anchor for type II membrane protein membrane-spanning segment. The N-linked (GlcNAc...) asparagine glycan is linked to asparagine 125. 365–367 (HLR) provides a ligand contact to substrate. N-linked (GlcNAc...) asparagine glycans are attached at residues asparagine 485 and asparagine 546.

The protein belongs to the glycosyltransferase GT106 family.

Its subcellular location is the membrane. It functions in the pathway glycan metabolism. In Arabidopsis thaliana (Mouse-ear cress), this protein is O-fucosyltransferase 2.